The following is a 322-amino-acid chain: NADH-quinone oxidoreductase subunit H (322 aa).

Transmembrane regions (helical) follow at residues 12-32 (VGKA…MSFI), 79-99 (IFIL…AVVP), 111-131 (VGLL…LFAG), 151-171 (LSYE…TGSF), 183-203 (LWNV…GVAV), 234-254 (FFVG…TLFF), 262-282 (LPPF…FILL), and 301-321 (VCLP…LINV).

This sequence belongs to the complex I subunit 1 family. NDH-1 is composed of 14 different subunits. Subunits NuoA, H, J, K, L, M, N constitute the membrane sector of the complex.

Its subcellular location is the cell inner membrane. It carries out the reaction a quinone + NADH + 5 H(+)(in) = a quinol + NAD(+) + 4 H(+)(out). In terms of biological role, NDH-1 shuttles electrons from NADH, via FMN and iron-sulfur (Fe-S) centers, to quinones in the respiratory chain. The immediate electron acceptor for the enzyme in this species is believed to be ubiquinone. Couples the redox reaction to proton translocation (for every two electrons transferred, four hydrogen ions are translocated across the cytoplasmic membrane), and thus conserves the redox energy in a proton gradient. This subunit may bind ubiquinone. The polypeptide is NADH-quinone oxidoreductase subunit H (Aeromonas salmonicida (strain A449)).